We begin with the raw amino-acid sequence, 131 residues long: Methylglyoxal synthase (131 aa).

An MGS-like domain is found at 1 to 131 (MKIALIAHDK…GDLDYRKLRK (131 aa)). Residues His8, Lys12, 34-37 (TGTT), and 54-55 (SG) contribute to the substrate site. Residue Asp60 is the Proton donor/acceptor of the active site. His87 contacts substrate.

It belongs to the methylglyoxal synthase family.

The catalysed reaction is dihydroxyacetone phosphate = methylglyoxal + phosphate. Its function is as follows. Catalyzes the formation of methylglyoxal from dihydroxyacetone phosphate. This Bacillus mycoides (strain KBAB4) (Bacillus weihenstephanensis) protein is Methylglyoxal synthase.